A 239-amino-acid polypeptide reads, in one-letter code: Probable transcriptional regulatory protein VC_A0006 (239 aa).

The protein belongs to the TACO1 family.

The protein localises to the cytoplasm. This chain is Probable transcriptional regulatory protein VC_A0006, found in Vibrio cholerae serotype O1 (strain ATCC 39315 / El Tor Inaba N16961).